The sequence spans 242 residues: ATP synthase subunit a, chloroplastic (242 aa).

The next 5 helical transmembrane spans lie at 34–54 (GQVL…AVLG), 93–113 (VPFI…GAII), 132–152 (INTT…AGLS), 188–210 (LFGN…PLVI), and 222–242 (GSVQ…EALE).

This sequence belongs to the ATPase A chain family. F-type ATPases have 2 components, CF(1) - the catalytic core - and CF(0) - the membrane proton channel. CF(1) has five subunits: alpha(3), beta(3), gamma(1), delta(1), epsilon(1). CF(0) has four main subunits: a, b, b' and c.

It is found in the plastid. The protein localises to the chloroplast thylakoid membrane. Its function is as follows. Key component of the proton channel; it plays a direct role in the translocation of protons across the membrane. This chain is ATP synthase subunit a, chloroplastic, found in Trieres chinensis (Marine centric diatom).